A 128-amino-acid chain; its full sequence is Lysozyme C-1 (128 aa).

Positions 1–128 (KVYDRCEFAR…VSQYIRGCKL (128 aa)) constitute a C-type lysozyme domain. 4 cysteine pairs are disulfide-bonded: Cys-6-Cys-126, Cys-30-Cys-114, Cys-63-Cys-79, and Cys-75-Cys-93. Catalysis depends on residues Glu-35 and Asp-51.

Belongs to the glycosyl hydrolase 22 family. Monomer.

The protein resides in the secreted. The enzyme catalyses Hydrolysis of (1-&gt;4)-beta-linkages between N-acetylmuramic acid and N-acetyl-D-glucosamine residues in a peptidoglycan and between N-acetyl-D-glucosamine residues in chitodextrins.. Its function is as follows. Lysozymes have primarily a bacteriolytic function; those in tissues and body fluids are associated with the monocyte-macrophage system and enhance the activity of immunoagents. The chain is Lysozyme C-1 from Sus scrofa (Pig).